Here is a 185-residue protein sequence, read N- to C-terminus: Elongation factor P (185 aa).

Belongs to the elongation factor P family.

It is found in the cytoplasm. It participates in protein biosynthesis; polypeptide chain elongation. Its function is as follows. Involved in peptide bond synthesis. Stimulates efficient translation and peptide-bond synthesis on native or reconstituted 70S ribosomes in vitro. Probably functions indirectly by altering the affinity of the ribosome for aminoacyl-tRNA, thus increasing their reactivity as acceptors for peptidyl transferase. The polypeptide is Elongation factor P (Bacillus anthracis (strain CDC 684 / NRRL 3495)).